Here is a 492-residue protein sequence, read N- to C-terminus: Polyamine oxidase 5 (492 aa).

E55, R63, V244, and E431 together coordinate FAD. Residues 490–492 (SRL) carry the Microbody targeting signal motif.

The protein belongs to the flavin monoamine oxidase family. It depends on FAD as a cofactor. As to expression, widely expressed.

It is found in the peroxisome. The enzyme catalyses spermine + O2 + H2O = 3-aminopropanal + spermidine + H2O2. It carries out the reaction norspermine + O2 + H2O = norspermidine + 3-aminopropanal + H2O2. It catalyses the reaction thermospermine + O2 + H2O = 3-aminopropanal + spermidine + H2O2. The protein operates within amine and polyamine degradation; spermine degradation. In terms of biological role, flavoenzyme involved in polyamine back-conversion. Catalyzes the oxidation of the secondary amino group of polyamines, such as spermine. Substrate preference is spermine &gt; thermospermine &gt; norspermine. No activity detected when putrescine, spermidine or N(1)-acetylspermidine are used as substrates. Plays an important role in the regulation of polyamine intracellular concentration. May play a role in producing hydrogen peroxide during seed germination. The sequence is that of Polyamine oxidase 5 from Oryza sativa subsp. japonica (Rice).